A 132-amino-acid chain; its full sequence is Small ribosomal subunit protein uS8 (132 aa).

This sequence belongs to the universal ribosomal protein uS8 family. As to quaternary structure, part of the 30S ribosomal subunit. Contacts proteins S5 and S12.

Functionally, one of the primary rRNA binding proteins, it binds directly to 16S rRNA central domain where it helps coordinate assembly of the platform of the 30S subunit. This Syntrophomonas wolfei subsp. wolfei (strain DSM 2245B / Goettingen) protein is Small ribosomal subunit protein uS8.